The sequence spans 425 residues: Probable isoprenylcysteine alpha-carbonyl methylesterase ICMEL1 (425 aa).

Positions 1–10 are enriched in basic and acidic residues; the sequence is MQVELADRAA. Residues 1–42 form a disordered region; that stretch reads MQVELADRAAARPSETGEAPPSSPAAAAAASAAAEDAPLLPG. Over residues 24 to 34 the composition is skewed to low complexity; sequence PAAAAAASAAA. Helical transmembrane passes span 99-119 and 154-174; these read FLAL…VVYY and VVAF…GALL. Substrate is bound by residues 160-162 and 231-233; these read GGA and QSA. Residues serine 232, aspartate 334, and histidine 366 contribute to the active site.

Belongs to the AB hydrolase superfamily. Isoprenylcysteine methylesterase family.

It is found in the endoplasmic reticulum membrane. The protein localises to the golgi apparatus membrane. It catalyses the reaction [protein]-C-terminal S-[(2E,6E)-farnesyl]-L-cysteine methyl ester + H2O = [protein]-C-terminal S-[(2E,6E)-farnesyl]-L-cysteine + methanol + H(+). Catalyzes the demethylation of isoprenylcysteine methylesters. This Oryza sativa subsp. japonica (Rice) protein is Probable isoprenylcysteine alpha-carbonyl methylesterase ICMEL1 (IMCEL1).